A 62-amino-acid polypeptide reads, in one-letter code: Alkaline proteinase (62 aa).

A Peptidase S8 domain is found at 1–62 (GSTSYIYDTS…FAPGTSVLSS (62 aa)). Catalysis depends on D21, which acts as the Charge relay system.

Its subcellular location is the secreted. With respect to regulation, inhibited by phenylmethanesulfonyl fluoride (PMSF) and chymostatin (CST), but not by Bowman-Birk type trypsin-chymotrypsin inhibitor (BBI). Serine protease. May be involved in the invasion of grains and hydrolysis of grain proteins. In Fusarium culmorum, this protein is Alkaline proteinase.